The sequence spans 55 residues: U-reduvitoxin-Pr2a (55 aa).

Positions 1–21 (MMKFLLVLFLITITLITMAYS) are cleaved as a signal peptide. Disulfide bonds link cysteine 26–cysteine 41, cysteine 33–cysteine 46, and cysteine 40–cysteine 51.

It belongs to the venom Ptu1-like knottin family. Expressed by the venom gland (posterior main gland) (at protein level).

It is found in the secreted. Its function is as follows. Binds reversibly and blocks P/Q-type voltage-gated calcium channels (Cav). In Platymeris rhadamanthus (Red spot assassin bug), this protein is U-reduvitoxin-Pr2a.